Reading from the N-terminus, the 3184-residue chain is Cilia and flagella-associated protein 47 (3184 aa).

The Calponin-homology (CH) domain occupies 1729-1851 (SDSERILLSW…LCVYLYERLP (123 aa)). Residues 2491 to 2514 (RDEEESQEETDTEKDFSSQETPSD) are disordered. A compositionally biased stretch (acidic residues) spans 2493–2502 (EEESQEETDT).

In terms of assembly, interacts with CFAP65. Highly expressed in spermatzoa (at protein level).

Its subcellular location is the cytoplasm. The protein localises to the cytoskeleton. It localises to the flagellum basal body. Its function is as follows. Plays a role in flagellar formation and sperm motility. The protein is Cilia and flagella-associated protein 47 of Mus musculus (Mouse).